Here is a 900-residue protein sequence, read N- to C-terminus: Methionine--tRNA ligase, cytoplasmic (900 aa).

Positions 74–198 constitute a GST C-terminal domain; it reads GWEQDDLTNQ…VLKQQGVLAL (125 aa). The 'HIGH' region motif lies at 273-283; sequence PYVNNVPHLGN. Residues 593–597 carry the 'KMSKS' region motif; sequence KFSKS. Lys-596 contacts ATP. A Phosphoserine modification is found at Ser-825. Thr-835 bears the Phosphothreonine mark. The WHEP-TRS domain maps to 841-897; sequence QIQALMDEVTKQGNIVRELKAQKADKNEVAAEVAKLLDLKKQLAVAEGKPPEAPKGK.

This sequence belongs to the class-I aminoacyl-tRNA synthetase family. In terms of assembly, monomer. Part of a multisubunit complex that groups tRNA ligases for Arg (RARS1), Asp (DARS1), Gln (QARS1), Ile (IARS1), Leu (LARS1), Lys (KARS1), Met (MARS1) the bifunctional ligase for Glu and Pro (EPRS1) and the auxiliary subunits AIMP1/p43, AIMP2/p38 and EEF1E1/p18. Forms a linear complex that contains MARS1, EEF1E1, EPRS1 and AIMP2 that is at the core of the multisubunit complex.

Its subcellular location is the cytoplasm. It is found in the cytosol. It localises to the nucleus. The protein resides in the nucleolus. The catalysed reaction is tRNA(Met) + L-methionine + ATP = L-methionyl-tRNA(Met) + AMP + diphosphate. Its activity is regulated as follows. Enzyme activity is increased by spermidine, EEF1A1, and when the Mg(2+) concentration is increased from 5 mM to 13 mM (in vitro), possibly by promoting the dissociation of the complex between the enzyme and its product. Its function is as follows. Catalyzes the specific attachment of an amino acid to its cognate tRNA in a 2 step reaction: the amino acid (AA) is first activated by ATP to form AA-AMP and then transferred to the acceptor end of the tRNA. Plays a role in the synthesis of ribosomal RNA in the nucleolus. The protein is Methionine--tRNA ligase, cytoplasmic of Homo sapiens (Human).